The sequence spans 451 residues: Alpha-galactosidase (451 aa).

An NAD(+)-binding site is contributed by 5-71 (PKITFIGAGS…ASGKITCHTQ (67 aa)). Asparagine 151 provides a ligand contact to substrate. Residue cysteine 173 participates in Mn(2+) binding. Residue histidine 174 is the Proton donor of the active site. Histidine 203 is a Mn(2+) binding site. Arginine 287 contacts substrate.

This sequence belongs to the glycosyl hydrolase 4 family. Homodimer. The cofactor is NAD(+). Requires Mn(2+) as cofactor.

The catalysed reaction is Hydrolysis of terminal, non-reducing alpha-D-galactose residues in alpha-D-galactosides, including galactose oligosaccharides, galactomannans and galactolipids.. In Escherichia coli (strain K12), this protein is Alpha-galactosidase (melA).